The sequence spans 239 residues: Ribose-5-phosphate isomerase A (239 aa).

Residues 40 to 43 (SGST), 96 to 99 (DGAD), and 110 to 113 (KGGG) contribute to the substrate site. The active-site Proton acceptor is Glu119. Lys137 lines the substrate pocket.

This sequence belongs to the ribose 5-phosphate isomerase family. Homodimer.

It catalyses the reaction aldehydo-D-ribose 5-phosphate = D-ribulose 5-phosphate. It functions in the pathway carbohydrate degradation; pentose phosphate pathway; D-ribose 5-phosphate from D-ribulose 5-phosphate (non-oxidative stage): step 1/1. Its function is as follows. Catalyzes the reversible conversion of ribose-5-phosphate to ribulose 5-phosphate. This is Ribose-5-phosphate isomerase A from Methanococcus maripaludis (strain DSM 14266 / JCM 13030 / NBRC 101832 / S2 / LL).